The primary structure comprises 87 residues: Small ribosomal subunit protein bS18 (87 aa).

Residues 1-21 (MRHKPTPPKGNKSLGNALASK) form a disordered region.

Belongs to the bacterial ribosomal protein bS18 family. As to quaternary structure, part of the 30S ribosomal subunit. Forms a tight heterodimer with protein bS6.

Its function is as follows. Binds as a heterodimer with protein bS6 to the central domain of the 16S rRNA, where it helps stabilize the platform of the 30S subunit. In Chlorobium phaeobacteroides (strain DSM 266 / SMG 266 / 2430), this protein is Small ribosomal subunit protein bS18.